We begin with the raw amino-acid sequence, 504 residues long: ATP synthase subunit alpha 2 (504 aa).

169–176 (GDRQTGKT) provides a ligand contact to ATP.

This sequence belongs to the ATPase alpha/beta chains family. As to quaternary structure, F-type ATPases have 2 components, CF(1) - the catalytic core - and CF(0) - the membrane proton channel. CF(1) has five subunits: alpha(3), beta(3), gamma(1), delta(1), epsilon(1). CF(0) has three main subunits: a(1), b(2) and c(9-12). The alpha and beta chains form an alternating ring which encloses part of the gamma chain. CF(1) is attached to CF(0) by a central stalk formed by the gamma and epsilon chains, while a peripheral stalk is formed by the delta and b chains.

Its subcellular location is the cell membrane. It catalyses the reaction ATP + H2O + 4 H(+)(in) = ADP + phosphate + 5 H(+)(out). Its function is as follows. Produces ATP from ADP in the presence of a proton gradient across the membrane. The alpha chain is a regulatory subunit. The polypeptide is ATP synthase subunit alpha 2 (Listeria monocytogenes serovar 1/2a (strain ATCC BAA-679 / EGD-e)).